A 247-amino-acid chain; its full sequence is Adenosylcobinamide-GDP ribazoletransferase (247 aa).

5 helical membrane passes run 34 to 54 (IVMF…IFIL), 59 to 79 (CGIP…TGGF), 113 to 133 (GGLA…ELAL), 138 to 158 (VLAA…LLMY), and 194 to 214 (VLLP…AIFI).

This sequence belongs to the CobS family. Mg(2+) is required as a cofactor.

The protein localises to the cell inner membrane. The catalysed reaction is alpha-ribazole + adenosylcob(III)inamide-GDP = adenosylcob(III)alamin + GMP + H(+). The enzyme catalyses alpha-ribazole 5'-phosphate + adenosylcob(III)inamide-GDP = adenosylcob(III)alamin 5'-phosphate + GMP + H(+). It participates in cofactor biosynthesis; adenosylcobalamin biosynthesis; adenosylcobalamin from cob(II)yrinate a,c-diamide: step 7/7. In terms of biological role, joins adenosylcobinamide-GDP and alpha-ribazole to generate adenosylcobalamin (Ado-cobalamin). Also synthesizes adenosylcobalamin 5'-phosphate from adenosylcobinamide-GDP and alpha-ribazole 5'-phosphate. This is Adenosylcobinamide-GDP ribazoletransferase from Salmonella arizonae (strain ATCC BAA-731 / CDC346-86 / RSK2980).